The sequence spans 286 residues: 4-hydroxybenzoate octaprenyltransferase (286 aa).

A run of 9 helical transmembrane segments spans residues 19–39 (AGWL…SHGF), 42–62 (WHLL…GCCV), 92–112 (ALVL…TTNA), 115–135 (IAWS…KRYV), 137–157 (MPQA…FAAV), 161–181 (VPLL…AYDT), 206–226 (FDVA…ALAL), 233–253 (AIYW…GWLI), and 264–284 (AFRL…LSYL).

It belongs to the UbiA prenyltransferase family. It depends on Mg(2+) as a cofactor.

The protein resides in the cell inner membrane. The enzyme catalyses all-trans-octaprenyl diphosphate + 4-hydroxybenzoate = 4-hydroxy-3-(all-trans-octaprenyl)benzoate + diphosphate. Its pathway is cofactor biosynthesis; ubiquinone biosynthesis. Functionally, catalyzes the prenylation of para-hydroxybenzoate (PHB) with an all-trans polyprenyl group. Mediates the second step in the final reaction sequence of ubiquinone-8 (UQ-8) biosynthesis, which is the condensation of the polyisoprenoid side chain with PHB, generating the first membrane-bound Q intermediate 3-octaprenyl-4-hydroxybenzoate. This is 4-hydroxybenzoate octaprenyltransferase from Polaromonas sp. (strain JS666 / ATCC BAA-500).